The following is a 170-amino-acid chain: Acireductone dioxygenase (170 aa).

4 residues coordinate Fe(2+): His-99, His-101, Glu-105, and His-144. The Ni(2+) site is built by His-99, His-101, Glu-105, and His-144.

It belongs to the acireductone dioxygenase (ARD) family. As to quaternary structure, monomer. The cofactor is Fe(2+). Ni(2+) is required as a cofactor.

The enzyme catalyses 1,2-dihydroxy-5-(methylsulfanyl)pent-1-en-3-one + O2 = 3-(methylsulfanyl)propanoate + CO + formate + 2 H(+). It carries out the reaction 1,2-dihydroxy-5-(methylsulfanyl)pent-1-en-3-one + O2 = 4-methylsulfanyl-2-oxobutanoate + formate + 2 H(+). Its pathway is amino-acid biosynthesis; L-methionine biosynthesis via salvage pathway; L-methionine from S-methyl-5-thio-alpha-D-ribose 1-phosphate: step 5/6. Its function is as follows. Catalyzes 2 different reactions between oxygen and the acireductone 1,2-dihydroxy-3-keto-5-methylthiopentene (DHK-MTPene) depending upon the metal bound in the active site. Fe-containing acireductone dioxygenase (Fe-ARD) produces formate and 2-keto-4-methylthiobutyrate (KMTB), the alpha-ketoacid precursor of methionine in the methionine recycle pathway. Ni-containing acireductone dioxygenase (Ni-ARD) produces methylthiopropionate, carbon monoxide and formate, and does not lie on the methionine recycle pathway. In Bacillus mycoides (strain KBAB4) (Bacillus weihenstephanensis), this protein is Acireductone dioxygenase.